Reading from the N-terminus, the 165-residue chain is uncharacterized protein (165 aa).

This is an uncharacterized protein from Rickettsia conorii (strain ATCC VR-613 / Malish 7).